The following is a 253-amino-acid chain: DnaJ homolog subfamily C member 8 (253 aa).

Position 2 is an N-acetylalanine (Ala2). Ser35 is modified (phosphoserine). Residues 57–124 (NPFEVLQIDP…QKKRALDVIQ (68 aa)) form the J domain. Lys146 carries the N6-acetyllysine modification. Residues 181–222 (EAKEMHERKRQREEEIEAQEKAKREREWQKNFEESRDGRVDS) show a composition bias toward basic and acidic residues. The segment at 181–253 (EAKEMHERKR…PPKVKMEQRE (73 aa)) is disordered. 2 short sequence motifs (nuclear localization signal) span residues 189-192 (KRQR) and 203-206 (KRER). Position 222 is a phosphoserine (Ser222). A compositionally biased stretch (basic residues) spans 231–240 (KGKKEKKNRT). The essential for polyglutamine aggregation suppression stretch occupies residues 232-253 (GKKEKKNRTFLRPPKVKMEQRE).

In terms of assembly, interacts with SRPK1. Interacts with HSP70 (HSPA1A or HSPA1B).

It localises to the nucleus. Functionally, suppresses polyglutamine (polyQ) aggregation of ATXN3 in neuronal cells. This Mus musculus (Mouse) protein is DnaJ homolog subfamily C member 8 (Dnajc8).